A 1177-amino-acid chain; its full sequence is Putative ATP-dependent RNA helicase TDRD12 (1177 aa).

Residues 56–118 (TLEEGQVCVV…RVVVESFMQL (63 aa)) form the Tudor 1 domain. The region spanning 447–635 (WPPIARGCDV…KEFMNDPYIV (189 aa)) is the Helicase ATP-binding domain. 460–467 (SHCESNPL) contacts ATP. The DEAH box signature appears at 574 to 577 (DEVE). The region spanning 900–999 (IVDKHMDLYA…HTLPPQAVEF (100 aa)) is the Tudor 2 domain. Positions 1098 to 1177 (EESLSQTPPR…VFKRWLSSNR (80 aa)) are disordered. The span at 1100–1115 (SLSQTPPRVTGTSPAQ) shows a compositional bias: polar residues.

In terms of assembly, component of a mRNP complex containing PIWIL2, TDRD1 and piRNAs. Component of the PET complex, at least composed of EXD1, PIWIL2, TDRD12 and piRNAs.

The catalysed reaction is ATP + H2O = ADP + phosphate + H(+). In terms of biological role, probable ATP-binding RNA helicase required during spermatogenesis to repress transposable elements and preventing their mobilization, which is essential for the germline integrity. Acts via the piRNA metabolic process, which mediates the repression of transposable elements during meiosis by forming complexes composed of piRNAs and Piwi proteins and governs the methylation and subsequent repression of transposons. Involved in the secondary piRNAs metabolic process. Acts via the PET complex, a multiprotein complex required during the secondary piRNAs metabolic process for the PIWIL2 slicing-triggered loading of PIWIL4 piRNAs. The sequence is that of Putative ATP-dependent RNA helicase TDRD12 (TDRD12) from Homo sapiens (Human).